The chain runs to 303 residues: Inosose dehydratase (303 aa).

The protein belongs to the IolE/MocC family. Requires glutathione as cofactor. The cofactor is Co(2+). It depends on Mn(2+) as a cofactor.

The enzyme catalyses scyllo-inosose = 3D-3,5/4-trihydroxycyclohexane-1,2-dione + H2O. It participates in polyol metabolism; myo-inositol degradation into acetyl-CoA; acetyl-CoA from myo-inositol: step 2/7. Functionally, catalyzes the dehydration of inosose (2-keto-myo-inositol, 2KMI or 2,4,6/3,5-pentahydroxycyclohexanone) to 3D-(3,5/4)-trihydroxycyclohexane-1,2-dione (D-2,3-diketo-4-deoxy-epi-inositol). In Halalkalibacterium halodurans (strain ATCC BAA-125 / DSM 18197 / FERM 7344 / JCM 9153 / C-125) (Bacillus halodurans), this protein is Inosose dehydratase.